Consider the following 498-residue polypeptide: Guanosine-5'-triphosphate,3'-diphosphate pyrophosphatase (498 aa).

The protein belongs to the GppA/Ppx family. GppA subfamily.

It catalyses the reaction guanosine 3'-diphosphate 5'-triphosphate + H2O = guanosine 3',5'-bis(diphosphate) + phosphate + H(+). The protein operates within purine metabolism; ppGpp biosynthesis; ppGpp from GTP: step 2/2. Catalyzes the conversion of pppGpp to ppGpp. Guanosine pentaphosphate (pppGpp) is a cytoplasmic signaling molecule which together with ppGpp controls the 'stringent response', an adaptive process that allows bacteria to respond to amino acid starvation, resulting in the coordinated regulation of numerous cellular activities. This Pectobacterium atrosepticum (strain SCRI 1043 / ATCC BAA-672) (Erwinia carotovora subsp. atroseptica) protein is Guanosine-5'-triphosphate,3'-diphosphate pyrophosphatase.